Here is a 159-residue protein sequence, read N- to C-terminus: Globin-like protein (159 aa).

The Globin domain occupies 1 to 152; the sequence is MSMNRQEISD…FNAESQTHLK (152 aa). Residue His101 participates in heme binding.

The protein belongs to the globin family. As to quaternary structure, homodimer. As to expression, expressed mainly in a subset of neuronal cells and in head muscular tissue.

The protein localises to the cytoplasm. Functionally, may be a globin and may play a role in oxygen transport. The protein is Globin-like protein (glb-1) of Caenorhabditis elegans.